An 893-amino-acid polypeptide reads, in one-letter code: Translation initiation factor IF-2 (893 aa).

Positions 49–303 (LNREAGSGPD…KGSSLQQGFQ (255 aa)) are disordered. Over residues 68–82 (STLNIPGTGGKSKSV) the composition is skewed to polar residues. Composition is skewed to basic and acidic residues over residues 93–159 (VKRD…KDKV) and 166–216 (DMTK…EENK). The span at 254–269 (GRGRNAKAARPAKKGN) shows a compositional bias: basic residues. Over residues 270–283 (KHAESKADREEARA) the composition is skewed to basic and acidic residues. In terms of domain architecture, tr-type G spans 392-561 (PRAPVVTIMG…LLQAEVLELK (170 aa)). The segment at 401–408 (GHVDHGKT) is G1. 401–408 (GHVDHGKT) contributes to the GTP binding site. The interval 426–430 (GITQH) is G2. Residues 447–450 (DTPG) form a G3 region. Residues 447-451 (DTPGH) and 501-504 (NKID) contribute to the GTP site. Residues 501–504 (NKID) form a G4 region. The segment at 537–539 (SAK) is G5.

The protein belongs to the TRAFAC class translation factor GTPase superfamily. Classic translation factor GTPase family. IF-2 subfamily.

The protein resides in the cytoplasm. Its function is as follows. One of the essential components for the initiation of protein synthesis. Protects formylmethionyl-tRNA from spontaneous hydrolysis and promotes its binding to the 30S ribosomal subunits. Also involved in the hydrolysis of GTP during the formation of the 70S ribosomal complex. This is Translation initiation factor IF-2 from Salmonella arizonae (strain ATCC BAA-731 / CDC346-86 / RSK2980).